We begin with the raw amino-acid sequence, 360 residues long: Phospho-N-acetylmuramoyl-pentapeptide-transferase (360 aa).

Transmembrane regions (helical) follow at residues 27 to 47 (GALI…INSL), 71 to 91 (TPTM…LLWA), 93 to 113 (LSSI…SIGF), 134 to 154 (LGLE…NGQA), 168 to 188 (FIIN…VGAG), 199 to 219 (GLAI…AYLS), 239 to 259 (LAVV…FNAP), 262 to 282 (AIFM…TVAV), 288 to 308 (IVLV…IIQV), and 337 to 357 (QVVI…LSTL).

The protein belongs to the glycosyltransferase 4 family. MraY subfamily. Mg(2+) is required as a cofactor.

The protein resides in the cell inner membrane. It carries out the reaction UDP-N-acetyl-alpha-D-muramoyl-L-alanyl-gamma-D-glutamyl-meso-2,6-diaminopimeloyl-D-alanyl-D-alanine + di-trans,octa-cis-undecaprenyl phosphate = di-trans,octa-cis-undecaprenyl diphospho-N-acetyl-alpha-D-muramoyl-L-alanyl-D-glutamyl-meso-2,6-diaminopimeloyl-D-alanyl-D-alanine + UMP. The protein operates within cell wall biogenesis; peptidoglycan biosynthesis. In terms of biological role, catalyzes the initial step of the lipid cycle reactions in the biosynthesis of the cell wall peptidoglycan: transfers peptidoglycan precursor phospho-MurNAc-pentapeptide from UDP-MurNAc-pentapeptide onto the lipid carrier undecaprenyl phosphate, yielding undecaprenyl-pyrophosphoryl-MurNAc-pentapeptide, known as lipid I. The polypeptide is Phospho-N-acetylmuramoyl-pentapeptide-transferase (Mesorhizobium japonicum (strain LMG 29417 / CECT 9101 / MAFF 303099) (Mesorhizobium loti (strain MAFF 303099))).